We begin with the raw amino-acid sequence, 509 residues long: MSLHLKPGQLTLADLRQAYLAPVRLSLDPSADAPVAASVACVENIIAEGRTAYGINTGFGLLASTRISPADLEKLQRSIVLSHAAGVGEALDDAMVRLVMLLKVNSLARGFSGIRRKVIDALIALINAEVYPHIPLKGSVGASGDLAPLAHMSLVLIGESRARHRGEWLPAAEALAVAGLEPLTLAAKEGLALLNGTQVSTAYALRGLFEAEDLFAAATVCGGLSVEAMLGSRAPFDARIHAARGQRGQIDVAAAYRDLLTASSEVARSHEKCDKVQDPYSLRCQPQVMGACLTQMRQAAEVLEIEANAVSDNPLVFAAEGDVISGGNFHAEPVAMAADNLALALAEIGSLSERRISLMMDMHMSQLPPFLVANGGVNSGFMIAQVTAAALASDNKALAHPASVDSLPTSANQEDHVSMAPNAGKRLWAMAENVRGILAVEWLGACQGLDFREGLKSSPKLEQARRLLRDKVPYYQEDRFFAPDIEAASQLLASGCLNALLPARLLPSL.

The segment at residues 142-144 is a cross-link (5-imidazolinone (Ala-Gly)); it reads ASG. 2,3-didehydroalanine (Ser) is present on Ser143.

It belongs to the PAL/histidase family. Contains an active site 4-methylidene-imidazol-5-one (MIO), which is formed autocatalytically by cyclization and dehydration of residues Ala-Ser-Gly.

Its subcellular location is the cytoplasm. The catalysed reaction is L-histidine = trans-urocanate + NH4(+). Its pathway is amino-acid degradation; L-histidine degradation into L-glutamate; N-formimidoyl-L-glutamate from L-histidine: step 1/3. The polypeptide is Histidine ammonia-lyase (Pseudomonas aeruginosa (strain UCBPP-PA14)).